The chain runs to 147 residues: UPF0178 protein VIBHAR_03247 (147 aa).

The protein belongs to the UPF0178 family.

In Vibrio campbellii (strain ATCC BAA-1116), this protein is UPF0178 protein VIBHAR_03247.